The primary structure comprises 959 residues: Isoleucine--tRNA ligase (959 aa).

Positions 66–76 (PYANGDLHIGH) match the 'HIGH' region motif. Glu592 is an L-isoleucyl-5'-AMP binding site. Positions 633-637 (KMSKS) match the 'KMSKS' region motif. Residue Lys636 participates in ATP binding. 4 residues coordinate Zn(2+): Cys922, Cys925, Cys942, and Cys945.

It belongs to the class-I aminoacyl-tRNA synthetase family. IleS type 1 subfamily. In terms of assembly, monomer. Zn(2+) is required as a cofactor.

The protein resides in the cytoplasm. The enzyme catalyses tRNA(Ile) + L-isoleucine + ATP = L-isoleucyl-tRNA(Ile) + AMP + diphosphate. In terms of biological role, catalyzes the attachment of isoleucine to tRNA(Ile). As IleRS can inadvertently accommodate and process structurally similar amino acids such as valine, to avoid such errors it has two additional distinct tRNA(Ile)-dependent editing activities. One activity is designated as 'pretransfer' editing and involves the hydrolysis of activated Val-AMP. The other activity is designated 'posttransfer' editing and involves deacylation of mischarged Val-tRNA(Ile). The protein is Isoleucine--tRNA ligase of Ralstonia pickettii (strain 12J).